Reading from the N-terminus, the 491-residue chain is MNDHQKNHATSQDDNTKSTPSKNSKHIKIKLWHFILVILGIILLTSIITVVSTILISHQKSGLNKEQRANLKKIEYVYQTLNKDYYKKQSSDKLTQSAIDGMVKELKDPYSEYMTAEETKQFNEGVSGDFVGIGAEMQKKNEQISVTSPMKDSPAEKAGIQPKDIVTQVNHHSVVGKPLDQVVKMVRGKKGTYVTLTIKRGSQEKDIKIKRDTIHVKSVEYEKKGNVGVLTINKFQSNTSGELKSAIIKAHKQGIRHIILDLRNNPGGLLDEAVKMANIFIDKGNTVVQLEKGKDKEELKTSNQALKQAKDMKVSILVNEGSASASEVFTGAMKDYHKAKVYGSKTFGKGIVQTTREFSDGSLIKYTEMKWLTPDGHYIHGKGIRPDVSISTPKYQSLNVIPDNKTYHQGEKDKNVKTMKIGLKALGYPIDNETNIFDEQLESAIKTFQQDNNLKVNGNFDKKTNDKFTEKLVEKANKKDTVLNDLLNKLK.

The tract at residues 1–22 (MNDHQKNHATSQDDNTKSTPSK) is disordered. A compositionally biased stretch (polar residues) spans 8–22 (HATSQDDNTKSTPSK). A helical transmembrane segment spans residues 31 to 51 (LWHFILVILGIILLTSIITVV). The PDZ domain occupies 119-201 (TKQFNEGVSG…TYVTLTIKRG (83 aa)). Residues S324, D335, and K349 each act as charge relay system in the active site.

This sequence belongs to the peptidase S41A family.

The protein resides in the cell membrane. The sequence is that of Probable CtpA-like serine protease from Staphylococcus epidermidis (strain ATCC 12228 / FDA PCI 1200).